Consider the following 378-residue polypeptide: Outer membrane porin C (378 aa).

An N-terminal signal peptide occupies residues 1-21 (MKVKVLSLLVPALLVAGAANA).

It belongs to the Gram-negative porin family. In terms of assembly, homotrimer.

It localises to the cell outer membrane. In terms of biological role, forms pores that allow passive diffusion of small molecules across the outer membrane. This Salmonella typhimurium (strain LT2 / SGSC1412 / ATCC 700720) protein is Outer membrane porin C (ompC).